The chain runs to 59 residues: MICYNQQSTEPPTTKTCSEGQCYKKTWSDHRGTIIERGCACPNVKPGVKISCCSSDKCR.

4 disulfides stabilise this stretch: Cys-3–Cys-22, Cys-17–Cys-39, Cys-41–Cys-52, and Cys-53–Cys-58.

Belongs to the three-finger toxin family. Short-chain subfamily. Type I alpha-neurotoxin sub-subfamily. As to expression, expressed by the venom gland.

The protein resides in the secreted. Functionally, produces peripheral paralysis by blocking neuromuscular transmission at the postsynaptic site. Binds to and inhibits the endogenous nicotinic acetylcholine receptors (nAChR) in human rhabdomyosarcoma TE 671 cell line with an IC(50) of 48.2 mM. This neurotoxin is lethal to mice by intraperitoneal injection and to zebrafish by injection at the back of the dorsolateral region. The chain is Three-finger toxin MS1 from Micrurus surinamensis (Surinam coral snake).